The chain runs to 427 residues: Phosphoglucosamine mutase (427 aa).

The active-site Phosphoserine intermediate is the Ser94. Mg(2+) contacts are provided by Ser94, Asp228, Asp230, and Asp232. Ser94 carries the phosphoserine modification.

This sequence belongs to the phosphohexose mutase family. Requires Mg(2+) as cofactor. Post-translationally, activated by phosphorylation.

It carries out the reaction alpha-D-glucosamine 1-phosphate = D-glucosamine 6-phosphate. Catalyzes the conversion of glucosamine-6-phosphate to glucosamine-1-phosphate. This Thermotoga sp. (strain RQ2) protein is Phosphoglucosamine mutase.